Consider the following 201-residue polypeptide: Probable GTP-binding protein EngB (201 aa).

In terms of domain architecture, EngB-type G spans 22–195 (SLPEIAFCGR…MEQLEMILKY (174 aa)). Residues 30–37 (GRSNVGKS), 57–61 (GKTRT), 75–78 (DLPG), 142–145 (TKLD), and 174–176 (YSS) each bind GTP. Residues Ser37 and Thr59 each coordinate Mg(2+).

The protein belongs to the TRAFAC class TrmE-Era-EngA-EngB-Septin-like GTPase superfamily. EngB GTPase family. Requires Mg(2+) as cofactor.

Necessary for normal cell division and for the maintenance of normal septation. The sequence is that of Probable GTP-binding protein EngB from Finegoldia magna (strain ATCC 29328 / DSM 20472 / WAL 2508) (Peptostreptococcus magnus).